Reading from the N-terminus, the 29-residue chain is Omega-conotoxins GVIIA/GVIIB (29 aa).

3 cysteine pairs are disulfide-bonded: Cys-1–Cys-16, Cys-8–Cys-19, and Cys-15–Cys-26. 4-hydroxyproline is present on residues Pro-4 and Pro-7.

Expressed by the venom duct.

Its subcellular location is the secreted. Functionally, omega-conotoxins act at presynaptic membranes, they bind and block voltage-gated calcium channels (Cav). This Conus geographus (Geography cone) protein is Omega-conotoxins GVIIA/GVIIB.